Here is a 292-residue protein sequence, read N- to C-terminus: Transcription antiterminator LacT (292 aa).

PRD domains are found at residues 66 to 170 (NIPI…DDGE) and 172 to 284 (VFGK…APAQ).

The protein belongs to the transcriptional antiterminator BglG family.

Its function is as follows. Mediates positive regulation of the lac operon by functioning as an antiterminator factor of transcription. In Lacticaseibacillus casei (Lactobacillus casei), this protein is Transcription antiterminator LacT (lacT).